A 130-amino-acid polypeptide reads, in one-letter code: Small ribosomal subunit protein uS8A (130 aa).

Belongs to the universal ribosomal protein uS8 family. Component of the small ribosomal subunit (SSU). Mature yeast ribosomes consist of a small (40S) and a large (60S) subunit. The 40S small subunit contains 1 molecule of ribosomal RNA (18S rRNA) and at least 33 different proteins. The large 60S subunit contains 3 rRNA molecules (25S, 5.8S and 5S rRNA) and at least 46 different proteins.

The protein resides in the cytoplasm. The protein localises to the nucleus. In terms of biological role, component of the ribosome, a large ribonucleoprotein complex responsible for the synthesis of proteins in the cell. The small ribosomal subunit (SSU) binds messenger RNAs (mRNAs) and translates the encoded message by selecting cognate aminoacyl-transfer RNA (tRNA) molecules. The large subunit (LSU) contains the ribosomal catalytic site termed the peptidyl transferase center (PTC), which catalyzes the formation of peptide bonds, thereby polymerizing the amino acids delivered by tRNAs into a polypeptide chain. The nascent polypeptides leave the ribosome through a tunnel in the LSU and interact with protein factors that function in enzymatic processing, targeting, and the membrane insertion of nascent chains at the exit of the ribosomal tunnel. The chain is Small ribosomal subunit protein uS8A (rps2201) from Schizosaccharomyces pombe (strain 972 / ATCC 24843) (Fission yeast).